The sequence spans 444 residues: ATP-dependent protease ATPase subunit HslU (444 aa).

ATP contacts are provided by residues Ile18 and 60 to 65 (GVGKTE). The tract at residues 141–161 (DAWGNNEEGDNDSGTRQSFRK) is disordered. 3 residues coordinate ATP: Asp257, Glu322, and Arg394.

Belongs to the ClpX chaperone family. HslU subfamily. As to quaternary structure, a double ring-shaped homohexamer of HslV is capped on each side by a ring-shaped HslU homohexamer. The assembly of the HslU/HslV complex is dependent on binding of ATP.

The protein resides in the cytoplasm. In terms of biological role, ATPase subunit of a proteasome-like degradation complex; this subunit has chaperone activity. The binding of ATP and its subsequent hydrolysis by HslU are essential for unfolding of protein substrates subsequently hydrolyzed by HslV. HslU recognizes the N-terminal part of its protein substrates and unfolds these before they are guided to HslV for hydrolysis. The chain is ATP-dependent protease ATPase subunit HslU from Aliivibrio fischeri (strain MJ11) (Vibrio fischeri).